A 144-amino-acid chain; its full sequence is Prefoldin subunit alpha (144 aa).

Belongs to the prefoldin alpha subunit family. As to quaternary structure, heterohexamer of two alpha and four beta subunits.

The protein localises to the cytoplasm. Functionally, molecular chaperone capable of stabilizing a range of proteins. Seems to fulfill an ATP-independent, HSP70-like function in archaeal de novo protein folding. The chain is Prefoldin subunit alpha from Methanococcus aeolicus (strain ATCC BAA-1280 / DSM 17508 / OCM 812 / Nankai-3).